The chain runs to 286 residues: Apoptosis inhibitor 1 (286 aa).

BIR repeat units follow at residues 29 to 96 (LIER…CAYA) and 131 to 199 (LQSR…CYFV). Cysteine 169, cysteine 172, histidine 189, and cysteine 196 together coordinate Zn(2+). The RING-type zinc finger occupies 238-274 (CKVCLERQRDAVLMPCRHFCVCVQCYFGLDQKCPTCR).

Its function is as follows. Acts by blocking cellular apoptosis early in infection. Later, stimulates caspase-3-like protease activity and induces apoptosis, probably to favor the release of occluded virions. This chain is Apoptosis inhibitor 1 (IAP1), found in Lepidoptera (butterflies and moths).